Consider the following 291-residue polypeptide: ATP synthase gamma chain (291 aa).

The protein belongs to the ATPase gamma chain family. In terms of assembly, F-type ATPases have 2 components, CF(1) - the catalytic core - and CF(0) - the membrane proton channel. CF(1) has five subunits: alpha(3), beta(3), gamma(1), delta(1), epsilon(1). CF(0) has three main subunits: a, b and c.

The protein localises to the cell inner membrane. In terms of biological role, produces ATP from ADP in the presence of a proton gradient across the membrane. The gamma chain is believed to be important in regulating ATPase activity and the flow of protons through the CF(0) complex. The sequence is that of ATP synthase gamma chain from Pelagibacter ubique (strain HTCC1062).